A 95-amino-acid polypeptide reads, in one-letter code: Small ribosomal subunit protein bS18 (95 aa).

Belongs to the bacterial ribosomal protein bS18 family. Part of the 30S ribosomal subunit. Forms a tight heterodimer with protein bS6.

Its function is as follows. Binds as a heterodimer with protein bS6 to the central domain of the 16S rRNA, where it helps stabilize the platform of the 30S subunit. The polypeptide is Small ribosomal subunit protein bS18 (Rickettsia felis (strain ATCC VR-1525 / URRWXCal2) (Rickettsia azadi)).